A 358-amino-acid polypeptide reads, in one-letter code: Phosphate acyltransferase (358 aa).

The protein belongs to the PlsX family. In terms of assembly, homodimer. Probably interacts with PlsY.

The protein resides in the cytoplasm. The catalysed reaction is a fatty acyl-[ACP] + phosphate = an acyl phosphate + holo-[ACP]. It participates in lipid metabolism; phospholipid metabolism. Its function is as follows. Catalyzes the reversible formation of acyl-phosphate (acyl-PO(4)) from acyl-[acyl-carrier-protein] (acyl-ACP). This enzyme utilizes acyl-ACP as fatty acyl donor, but not acyl-CoA. The polypeptide is Phosphate acyltransferase (Escherichia fergusonii (strain ATCC 35469 / DSM 13698 / CCUG 18766 / IAM 14443 / JCM 21226 / LMG 7866 / NBRC 102419 / NCTC 12128 / CDC 0568-73)).